We begin with the raw amino-acid sequence, 75 residues long: MARIDYATAPLFVIVGLAVVLTGATGYKRLSSDQDISLTRKGQMLWKDNPTHKFVDRNTTMGYFKTIETGKYLKE.

Residues 7-26 (ATAPLFVIVGLAVVLTGATG) form a helical membrane-spanning segment.

The protein localises to the membrane. This is an uncharacterized protein from Dictyostelium discoideum (Social amoeba).